A 201-amino-acid polypeptide reads, in one-letter code: Small ribosomal subunit protein uS4c (201 aa).

The S4 RNA-binding domain maps to 89-150 (MRLDNIVFRL…RQKSQAIITK (62 aa)).

It belongs to the universal ribosomal protein uS4 family. Part of the 30S ribosomal subunit. Contacts protein S5. The interaction surface between S4 and S5 is involved in control of translational fidelity.

Its subcellular location is the plastid. It is found in the chloroplast. In terms of biological role, one of the primary rRNA binding proteins, it binds directly to 16S rRNA where it nucleates assembly of the body of the 30S subunit. With S5 and S12 plays an important role in translational accuracy. This is Small ribosomal subunit protein uS4c (rps4) from Physcomitrium patens (Spreading-leaved earth moss).